A 212-amino-acid polypeptide reads, in one-letter code: Protein-L-isoaspartate O-methyltransferase (212 aa).

Serine 60 is a catalytic residue.

It belongs to the methyltransferase superfamily. L-isoaspartyl/D-aspartyl protein methyltransferase family.

Its subcellular location is the cytoplasm. It carries out the reaction [protein]-L-isoaspartate + S-adenosyl-L-methionine = [protein]-L-isoaspartate alpha-methyl ester + S-adenosyl-L-homocysteine. Its function is as follows. Catalyzes the methyl esterification of L-isoaspartyl residues in peptides and proteins that result from spontaneous decomposition of normal L-aspartyl and L-asparaginyl residues. It plays a role in the repair and/or degradation of damaged proteins. This chain is Protein-L-isoaspartate O-methyltransferase, found in Methanococcus maripaludis (strain C7 / ATCC BAA-1331).